The primary structure comprises 320 residues: o-succinylbenzoate synthase (320 aa).

Lys133 functions as the Proton donor in the catalytic mechanism. Mg(2+) contacts are provided by Asp161, Glu190, and Asp213. Lys235 functions as the Proton acceptor in the catalytic mechanism.

The protein belongs to the mandelate racemase/muconate lactonizing enzyme family. MenC type 1 subfamily. A divalent metal cation is required as a cofactor.

It carries out the reaction (1R,6R)-6-hydroxy-2-succinyl-cyclohexa-2,4-diene-1-carboxylate = 2-succinylbenzoate + H2O. It functions in the pathway quinol/quinone metabolism; 1,4-dihydroxy-2-naphthoate biosynthesis; 1,4-dihydroxy-2-naphthoate from chorismate: step 4/7. The protein operates within quinol/quinone metabolism; menaquinone biosynthesis. Its function is as follows. Converts 2-succinyl-6-hydroxy-2,4-cyclohexadiene-1-carboxylate (SHCHC) to 2-succinylbenzoate (OSB). The polypeptide is o-succinylbenzoate synthase (Escherichia coli (strain SMS-3-5 / SECEC)).